Reading from the N-terminus, the 64-residue chain is Prokaryotic ubiquitin-like protein Pup (64 aa).

A compositionally biased stretch (basic and acidic residues) spans M1–G11. A disordered region spans residues M1–D38. The interval D21–Y58 is ARC ATPase binding. A coiled-coil region spans residues A24–E52. At Q64 the chain carries Deamidated glutamine. Residue Q64 forms an Isoglutamyl lysine isopeptide (Gln-Lys) (interchain with K-? in acceptor proteins) linkage.

It belongs to the prokaryotic ubiquitin-like protein family. Strongly interacts with the proteasome-associated ATPase ARC through a hydrophobic interface; the interacting region of Pup lies in its C-terminal half. There is one Pup binding site per ARC hexamer ring. Is modified by deamidation of its C-terminal glutamine to glutamate by the deamidase Dop, a prerequisite to the subsequent pupylation process.

It functions in the pathway protein degradation; proteasomal Pup-dependent pathway. Functionally, protein modifier that is covalently attached to lysine residues of substrate proteins, thereby targeting them for proteasomal degradation. The tagging system is termed pupylation. The polypeptide is Prokaryotic ubiquitin-like protein Pup (Rhodococcus opacus (strain B4)).